Here is an 83-residue protein sequence, read N- to C-terminus: Exodeoxyribonuclease 7 small subunit (83 aa).

A disordered region spans residues 1 to 25 (MQDELFETEKAPPKNAKNAPKKSFE).

It belongs to the XseB family. As to quaternary structure, heterooligomer composed of large and small subunits.

It localises to the cytoplasm. The enzyme catalyses Exonucleolytic cleavage in either 5'- to 3'- or 3'- to 5'-direction to yield nucleoside 5'-phosphates.. Bidirectionally degrades single-stranded DNA into large acid-insoluble oligonucleotides, which are then degraded further into small acid-soluble oligonucleotides. This is Exodeoxyribonuclease 7 small subunit from Helicobacter pylori (strain P12).